The primary structure comprises 128 residues: Small ribosomal subunit protein uS11 (128 aa).

It belongs to the universal ribosomal protein uS11 family. In terms of assembly, part of the 30S ribosomal subunit. Interacts with proteins S7 and S18. Binds to IF-3.

Located on the platform of the 30S subunit, it bridges several disparate RNA helices of the 16S rRNA. Forms part of the Shine-Dalgarno cleft in the 70S ribosome. The chain is Small ribosomal subunit protein uS11 from Acinetobacter baylyi (strain ATCC 33305 / BD413 / ADP1).